Here is a 349-residue protein sequence, read N- to C-terminus: MRVADFSFELPDSLIARHPLAERHGSRLLVLDGPTGALSHRQFPDLLDYLRPGDLMVFNNTRVIPARLFGQKASGGKLEVLVERVLDSHRVLAHVRASKAPKVGAVILIDGGGEAEMVARHDTLFELRFTEEVLPLLDRVGHMPLPPYIDRPDEGADRERYQTVYAQRAGAVAAPTAGLHFDEALLEKIAAKGVERAFVTLHVGAGTFQPVRVDKIEDHHMHKEWLEVGQDVVDAIEACRARGGRVVAVGTTSVRSLESAARDGVLKAFSGDTDIFIYPGRPFHVVDALVTNFHLPESTLLMLVSAFAGYPETMAAYAAAVEHGYRFFSYGDAMFITRNPAPRGPEDQA.

This sequence belongs to the QueA family. Monomer.

It is found in the cytoplasm. It carries out the reaction 7-aminomethyl-7-carbaguanosine(34) in tRNA + S-adenosyl-L-methionine = epoxyqueuosine(34) in tRNA + adenine + L-methionine + 2 H(+). It participates in tRNA modification; tRNA-queuosine biosynthesis. Its function is as follows. Transfers and isomerizes the ribose moiety from AdoMet to the 7-aminomethyl group of 7-deazaguanine (preQ1-tRNA) to give epoxyqueuosine (oQ-tRNA). This chain is S-adenosylmethionine:tRNA ribosyltransferase-isomerase, found in Pseudomonas putida (strain GB-1).